We begin with the raw amino-acid sequence, 137 residues long: Transcription antitermination protein NusB (137 aa).

The protein belongs to the NusB family.

In terms of biological role, involved in transcription antitermination. Required for transcription of ribosomal RNA (rRNA) genes. Binds specifically to the boxA antiterminator sequence of the ribosomal RNA (rrn) operons. The chain is Transcription antitermination protein NusB from Clavibacter michiganensis subsp. michiganensis (strain NCPPB 382).